A 40-amino-acid chain; its full sequence is Dolichyl-diphosphooligosaccharide--protein glycosyltransferase subunit 4 (40 aa).

The Lumenal segment spans residues 1-4 (MITD). The chain crosses the membrane as a helical span at residues 5-25 (VQLAIFSNVLGVFLFLLVVAY). Residues 26-40 (HYINANTGKSSIKNK) lie on the Cytoplasmic side of the membrane.

The protein belongs to the OST4 family. In terms of assembly, component of the oligosaccharyltransferase (OST) complex.

The protein resides in the endoplasmic reticulum membrane. Subunit of the oligosaccharyl transferase (OST) complex that catalyzes the initial transfer of a defined glycan (Glc(3)Man(9)GlcNAc(2) in eukaryotes) from the lipid carrier dolichol-pyrophosphate to an asparagine residue within an Asn-X-Ser/Thr consensus motif in nascent polypeptide chains, the first step in protein N-glycosylation. N-glycosylation occurs cotranslationally and the complex associates with the Sec61 complex at the channel-forming translocon complex that mediates protein translocation across the endoplasmic reticulum (ER). All subunits are required for a maximal enzyme activity. The polypeptide is Dolichyl-diphosphooligosaccharide--protein glycosyltransferase subunit 4 (Drosophila mojavensis (Fruit fly)).